Reading from the N-terminus, the 584-residue chain is MTKRKKEVIDVDCSEKKDFVIDWSSAMDKEDEVPELEIVNTTKPTPPPPPTFFSDDQTDSPKLLTDRDLDEQLERKKAILTLGPGLPDKGEKIRLKIADLEEEKQRRVLEGSKMEVDRSSKVVSSTSSGSDVLPQGNAVSKDTSRGNADSKDTSRQGNADSKEVSRSTFSAVFSKPKTDSQSKKAFGKELEDLGCERRKHKAGRKPVTRLSNGWRLLPDVGKAEHSAKQFDSGLKESKGNKKSKEPYGKKRPMESSTYSLIDDDDDDDDDDDNDTSGHETPREWSWEKSPSQSSRRRKKSEDTVINVDEEEAQPSTVAEQAAELPEGLQEDICYPTRDDPHFVQVCLKDLECLAPREYLTSPVMNFYMRFLQQQISSSNQISADCHFFNTYFYKKLSDAVTYKGNDKDAFFVRFRRWWKGIDLFRKAYIFIPIHEDLHWSLVIVCIPDKKDESGLTILHLDSLGLHSRKSIVENVKRFLKDEWNYLNQDDYSLDLPISEKVWKNLPRRISEAVVQVPQQKNDFDCGPFVLFFIKRFIEEAPQRLKRKDLGMFDKKWFRPDEASALRIKIRNTLIELFRVSDQTE.

2 disordered regions span residues 28–64 (DKEDEVPELEIVNTTKPTPPPPPTFFSDDQTDSPKLL) and 99–323 (DLEE…QAAE). Over residues 99–120 (DLEEEKQRRVLEGSKMEVDRSS) the composition is skewed to basic and acidic residues. Low complexity predominate over residues 121–132 (KVVSSTSSGSDV). 2 stretches are compositionally biased toward basic and acidic residues: residues 142–165 (DTSRGNADSKDTSRQGNADSKEVS) and 176–196 (PKTDSQSKKAFGKELEDLGCE). The segment covering 197–207 (RRKHKAGRKPV) has biased composition (basic residues). The span at 221–253 (GKAEHSAKQFDSGLKESKGNKKSKEPYGKKRPM) shows a compositional bias: basic and acidic residues. Acidic residues predominate over residues 261 to 274 (IDDDDDDDDDDDND). Residues 275–286 (TSGHETPREWSW) show a composition bias toward basic and acidic residues. Residues His-438, Asp-461, and Cys-525 contribute to the active site.

The protein belongs to the peptidase C48 family.

The protein localises to the nucleus speckle. Functionally, protease that catalyzes two essential functions in the SUMO pathway: processing of full-length SUMOs to their mature forms and deconjugation of SUMO from targeted proteins. Cleaves precursors of SUM1 and SUM2, but not of SUM3 or SUM5. Able to release SUM1 and SUM2 from conjugates, but unable to cleave SUM3. Protease activity mainly directed at deconjugating SUM1 and SUM2 from their target proteins. Regulates salt stress responses and flowering time. Redundant with ULP1C. The polypeptide is Ubiquitin-like-specific protease 1D (ULP1D) (Arabidopsis thaliana (Mouse-ear cress)).